Here is an 830-residue protein sequence, read N- to C-terminus: uncharacterized protein (830 aa).

Disordered regions lie at residues 1 to 28 (MGVQ…DSIC), 70 to 147 (RRAN…GNFA), and 186 to 210 (AASP…SKSL). Positions 10 to 27 (NSKNWLRQPDQQPIQDSI) are enriched in polar residues. 2 stretches are compositionally biased toward low complexity: residues 100-130 (QKSS…SIQS) and 186-199 (AASP…ASTS). Over residues 200 to 210 (ENLTPTSSKSL) the composition is skewed to polar residues. 10 helical membrane-spanning segments follow: residues 505 to 525 (WLVA…VYGG), 529 to 549 (DMLI…YINP), 551 to 571 (FFLF…FLGR), 584 to 604 (FCFA…YVVF), 622 to 642 (MLYA…GSAL), 659 to 679 (IIAV…LSLL), 691 to 711 (IQMF…LHFG), 715 to 735 (ISSA…SHFI), 740 to 760 (FAVV…AQGG), and 802 to 822 (IAIG…PFFG).

It belongs to the ThrE exporter (TC 2.A.79) family.

Its subcellular location is the cell membrane. The protein resides in the cell tip. This is an uncharacterized protein from Schizosaccharomyces pombe (strain 972 / ATCC 24843) (Fission yeast).